Reading from the N-terminus, the 258-residue chain is E3 ubiquitin-protein ligase RNF170 (258 aa).

The Lumenal portion of the chain corresponds to 1–24; sequence MAKYQGEVQSLKLDDDSVIEGVSD. A helical membrane pass occupies residues 25–45; that stretch reads QVLVAVVVSFALIATLVYALF. Residues 46-201 lie on the Cytoplasmic side of the membrane; sequence RNVHQNIHPE…GGLFWMFRIR (156 aa). An RING-type zinc finger spans residues 87 to 130; the sequence is CPICLHQASFPVETNCGHLFCGACIIAYWRYGSWLGAISCPICR. The chain crosses the membrane as a helical span at residues 202–222; that stretch reads IILCLMGAFFYLISPLDFVPE. Position 223 (Ala223) is a topological domain, lumenal. A helical transmembrane segment spans residues 224 to 244; the sequence is LFGILGFLDDFFVIFLLLIYI. Over 245 to 258 the chain is Cytoplasmic; that stretch reads SIMYREVITQRLTR.

As to quaternary structure, (Microbial infection) Interacts with human cytomegalovirus protein NEC2/UL50; this interaction promotes of UBA7 ubiquitination and subsequent proteasomal degradation. In terms of assembly, constitutively associated with the ERLIN1/ERLIN 2 complex. Interacts with activated ITPR1. Expressed in the spinal cord.

It localises to the endoplasmic reticulum membrane. The enzyme catalyses S-ubiquitinyl-[E2 ubiquitin-conjugating enzyme]-L-cysteine + [acceptor protein]-L-lysine = [E2 ubiquitin-conjugating enzyme]-L-cysteine + N(6)-ubiquitinyl-[acceptor protein]-L-lysine.. It participates in protein modification; protein ubiquitination. E3 ubiquitin-protein ligase that plays an essential role in stimulus-induced inositol 1,4,5-trisphosphate receptor type 1 (ITPR1) ubiquitination and degradation via the endoplasmic reticulum-associated degradation (ERAD) pathway. Also involved in ITPR1 turnover in resting cells. Selectively inhibits the TLR3-triggered innate immune response by promoting the 'Lys-48'-linked polyubiquitination and degradation of TLR3. The sequence is that of E3 ubiquitin-protein ligase RNF170 (RNF170) from Homo sapiens (Human).